Reading from the N-terminus, the 475-residue chain is MSTAVATRKRAKPAPGPGAAPVAGKRRRKVDSAADRGKSKGGGKMNEEISSDSESESLAPRKTEEEEEEELEETAQEKKLRLAKLYLEQLRQQEEEKAEARAFEEDQVAGRLKEDVLEQRGRLQKSVAKEIQAPAPTDIRVLRGHQLSITCLVITPDDLAIFSAAKDCTIIKWSVETGRKLHVIPRAKKGAQGQPAGHSSHVLCMAISSDGKYLASGDRSKLILIWEAQSCQHLYTFTGHRDAVSGLAFRKGTHQLYSTSHDRSVKVWNAAENSYVETLFGHQDAVAALDALSRECCVTAGGRDGTVRVWKIPEESQLVFYGHQGSIDCIHLINEEHMVSGADDGSVALWGLSKKRPLALQREAHGLHGEPGLEQPFWVSSVAALLNTDLVATGSHNARVRLWQCGEGFRQLDPLCDIPLVGFINSLKFSSAGDFLVAGVGQEHRLGRWWRIKEARNSVCIIPLRRLPVSPVAGS.

The disordered stretch occupies residues 1–75 (MSTAVATRKR…EEEEELEETA (75 aa)). Positions 8–40 (RKRAKPAPGPGAAPVAGKRRRKVDSAADRGKSK) match the Nuclear localization signal motif. An Omega-N-methylarginine modification is found at arginine 10. Residues lysine 12 and lysine 25 each carry the N6-acetyllysine modification. Residues serine 50, serine 51, serine 53, and serine 57 each carry the phosphoserine modification. Over residues 65–74 (EEEEEELEET) the composition is skewed to acidic residues. Lysine 113 is covalently cross-linked (Glycyl lysine isopeptide (Lys-Gly) (interchain with G-Cter in SUMO2)). 7 WD repeats span residues 144–183 (GHQL…KLHV), 197–236 (GHSS…HLYT), 239–278 (GHRD…YVET), 281–320 (GHQD…QLVF), 322–360 (GHQG…PLAL), 374–413 (EQPF…RQLD), and 419–460 (PLVG…NSVC). Serine 470 is subject to Phosphoserine.

The protein belongs to the WD repeat RRP9 family. In terms of assembly, interacts specifically with the U3 small nucleolar RNA (U3 snoRNA). Binds a sub-fragment of the U3 snoRNA surrounding the B/C motif (3UBC). This association with the U3BC RNA is dependent on the binding of a protein called 15.5K to the box B/C motif. The association of the protein with the U3BC RNA was found to be also dependent on a conserved RNA structure that flanks the box B/C motif. Part of the small subunit (SSU) processome, composed of more than 70 proteins and the RNA chaperone small nucleolar RNA (snoRNA) U3. Acetylation at Lys-12 and Lys-25 by KAT2B/PCAF under stress impairs pre-rRNA processing. Deacetylation by SIRT7 enhances RRP9-binding to U3 snoRNA, which is a prerequisite for pre-rRNA processing.

The protein localises to the nucleus. The protein resides in the nucleolus. Its function is as follows. Component of a nucleolar small nuclear ribonucleoprotein particle (snoRNP) thought to participate in the processing and modification of pre-ribosomal RNA (pre-rRNA). Part of the small subunit (SSU) processome, first precursor of the small eukaryotic ribosomal subunit. During the assembly of the SSU processome in the nucleolus, many ribosome biogenesis factors, an RNA chaperone and ribosomal proteins associate with the nascent pre-rRNA and work in concert to generate RNA folding, modifications, rearrangements and cleavage as well as targeted degradation of pre-ribosomal RNA by the RNA exosome. The polypeptide is U3 small nucleolar RNA-interacting protein 2 (Rrp9) (Mus musculus (Mouse)).